The chain runs to 414 residues: Tryptophan synthase beta chain (414 aa).

Basic and acidic residues predominate over residues Met1–Phe26. Residues Met1–Gly27 form a disordered region. N6-(pyridoxal phosphate)lysine is present on Lys109.

This sequence belongs to the TrpB family. Tetramer of two alpha and two beta chains. It depends on pyridoxal 5'-phosphate as a cofactor.

The enzyme catalyses (1S,2R)-1-C-(indol-3-yl)glycerol 3-phosphate + L-serine = D-glyceraldehyde 3-phosphate + L-tryptophan + H2O. The protein operates within amino-acid biosynthesis; L-tryptophan biosynthesis; L-tryptophan from chorismate: step 5/5. Functionally, the beta subunit is responsible for the synthesis of L-tryptophan from indole and L-serine. This is Tryptophan synthase beta chain from Prochlorococcus marinus (strain MIT 9301).